Consider the following 48-residue polypeptide: Sperm protamine P1 (48 aa).

This sequence belongs to the protamine P1 family. Cross-linked by interchain disulfide bonds around the DNA-helix. Testis.

Its subcellular location is the nucleus. The protein localises to the chromosome. Protamines substitute for histones in the chromatin of sperm during the haploid phase of spermatogenesis. They compact sperm DNA into a highly condensed, stable and inactive complex. In Cavia porcellus (Guinea pig), this protein is Sperm protamine P1 (PRM1).